The following is a 460-amino-acid chain: Bifunctional protein GlmU (460 aa).

The interval 1-229 is pyrophosphorylase; it reads MTNYAIILAA…FNESLGVNDR (229 aa). UDP-N-acetyl-alpha-D-glucosamine-binding positions include 8–11, K22, Q72, and 77–78; these read LAAG and GT. D102 contributes to the Mg(2+) binding site. UDP-N-acetyl-alpha-D-glucosamine is bound by residues G139, E154, N169, and N227. Position 227 (N227) interacts with Mg(2+). The tract at residues 230-250 is linker; that stretch reads VALATAETVMRQRITQKHMVN. Positions 251 to 460 are N-acetyltransferase; that stretch reads GVTFHNPETV…RLAHHPSRSK (210 aa). Positions 332 and 350 each coordinate UDP-N-acetyl-alpha-D-glucosamine. Catalysis depends on H362, which acts as the Proton acceptor. Residues Y365 and N376 each contribute to the UDP-N-acetyl-alpha-D-glucosamine site. Acetyl-CoA contacts are provided by residues A379, 385–386, S404, A422, and R439; that span reads NY.

It in the N-terminal section; belongs to the N-acetylglucosamine-1-phosphate uridyltransferase family. In the C-terminal section; belongs to the transferase hexapeptide repeat family. In terms of assembly, homotrimer. It depends on Mg(2+) as a cofactor.

It localises to the cytoplasm. It catalyses the reaction alpha-D-glucosamine 1-phosphate + acetyl-CoA = N-acetyl-alpha-D-glucosamine 1-phosphate + CoA + H(+). The catalysed reaction is N-acetyl-alpha-D-glucosamine 1-phosphate + UTP + H(+) = UDP-N-acetyl-alpha-D-glucosamine + diphosphate. It participates in nucleotide-sugar biosynthesis; UDP-N-acetyl-alpha-D-glucosamine biosynthesis; N-acetyl-alpha-D-glucosamine 1-phosphate from alpha-D-glucosamine 6-phosphate (route II): step 2/2. The protein operates within nucleotide-sugar biosynthesis; UDP-N-acetyl-alpha-D-glucosamine biosynthesis; UDP-N-acetyl-alpha-D-glucosamine from N-acetyl-alpha-D-glucosamine 1-phosphate: step 1/1. It functions in the pathway bacterial outer membrane biogenesis; LPS lipid A biosynthesis. Functionally, catalyzes the last two sequential reactions in the de novo biosynthetic pathway for UDP-N-acetylglucosamine (UDP-GlcNAc). The C-terminal domain catalyzes the transfer of acetyl group from acetyl coenzyme A to glucosamine-1-phosphate (GlcN-1-P) to produce N-acetylglucosamine-1-phosphate (GlcNAc-1-P), which is converted into UDP-GlcNAc by the transfer of uridine 5-monophosphate (from uridine 5-triphosphate), a reaction catalyzed by the N-terminal domain. The protein is Bifunctional protein GlmU of Streptococcus pyogenes serotype M49 (strain NZ131).